The chain runs to 118 residues: Large ribosomal subunit protein uL24 (118 aa).

The protein belongs to the universal ribosomal protein uL24 family. As to quaternary structure, part of the 50S ribosomal subunit.

Functionally, one of two assembly initiator proteins, it binds directly to the 5'-end of the 23S rRNA, where it nucleates assembly of the 50S subunit. Its function is as follows. One of the proteins that surrounds the polypeptide exit tunnel on the outside of the subunit. This chain is Large ribosomal subunit protein uL24, found in Synechococcus sp. (strain CC9902).